The sequence spans 252 residues: F-box protein At5g39250 (252 aa).

The 42-residue stretch at 1 to 42 folds into the F-box domain; it reads MFSEEVLKNVFPLLEGEDLASCMGVCKQWRDIARDDFYWKCQ.

This chain is F-box protein At5g39250, found in Arabidopsis thaliana (Mouse-ear cress).